The sequence spans 157 residues: Protein Smg (157 aa).

Belongs to the Smg family.

In Pectobacterium carotovorum subsp. carotovorum (strain PC1), this protein is Protein Smg.